Reading from the N-terminus, the 273-residue chain is Ribosomal RNA small subunit methyltransferase A (273 aa).

S-adenosyl-L-methionine contacts are provided by asparagine 18, leucine 20, glycine 45, glutamate 66, aspartate 91, and asparagine 113.

The protein belongs to the class I-like SAM-binding methyltransferase superfamily. rRNA adenine N(6)-methyltransferase family. RsmA subfamily.

It is found in the cytoplasm. It carries out the reaction adenosine(1518)/adenosine(1519) in 16S rRNA + 4 S-adenosyl-L-methionine = N(6)-dimethyladenosine(1518)/N(6)-dimethyladenosine(1519) in 16S rRNA + 4 S-adenosyl-L-homocysteine + 4 H(+). In terms of biological role, specifically dimethylates two adjacent adenosines (A1518 and A1519) in the loop of a conserved hairpin near the 3'-end of 16S rRNA in the 30S particle. May play a critical role in biogenesis of 30S subunits. The sequence is that of Ribosomal RNA small subunit methyltransferase A from Erwinia tasmaniensis (strain DSM 17950 / CFBP 7177 / CIP 109463 / NCPPB 4357 / Et1/99).